The following is a 253-amino-acid chain: uncharacterized protein (253 aa).

Ile-17, Ser-36, Asp-62, Asn-89, Lys-123, Tyr-158, Lys-162, Val-191, and Thr-193 together coordinate NADP(+). The active-site Proton acceptor is Tyr-158. The active-site Lowers pKa of active site Tyr is the Lys-162.

Belongs to the short-chain dehydrogenases/reductases (SDR) family.

Its subcellular location is the cytoplasm. It is found in the nucleus. This is an uncharacterized protein from Schizosaccharomyces pombe (strain 972 / ATCC 24843) (Fission yeast).